The sequence spans 111 residues: Disintegrin Eo1 subunit 1 (111 aa).

A signal peptide spans 1–20 (MIQVLLVIICLAVFPYQGSS). Positions 21 to 46 (IILESGNVNDFELVYPKKVTVLPTGA) are excised as a propeptide. The region spanning 26–111 (GNVNDFELVY…SDCPRNPWKD (86 aa)) is the Disintegrin domain. 4 disulfides stabilise this stretch: Cys53/Cys76, Cys67/Cys73, Cys72/Cys97, and Cys85/Cys104. Residues 89–91 (WGD) carry the Cell attachment site; atypical (WGD) motif. A propeptide spanning residues 110–111 (KD) is cleaved from the precursor.

It belongs to the disintegrin family. Dimeric disintegrin subfamily. In terms of assembly, heterodimer; disulfide-linked. As to expression, expressed by the venom gland.

The protein resides in the secreted. Functionally, poor inhibitor of platelet aggregation. The disintegrin inhibits the adhesion of cells expressing the RGD-dependent integrin alpha-5/beta-1 (ITGA5/ITGB1) to immobilized fibronectin. Inhibition on alpha-IIb/beta-3 (ITGA2B/ITGB3) is low. The sequence is that of Disintegrin Eo1 subunit 1 from Echis ocellatus (Ocellated saw-scaled viper).